Consider the following 377-residue polypeptide: Chaperone protein DnaJ (377 aa).

Positions 5 to 69 constitute a J domain; it reads DYYEVLGVSK…NKRANYDQFG (65 aa). The CR-type zinc-finger motif lies at 134–216; the sequence is GTEKEISIRK…CHGKGTETKN (83 aa). Cys147, Cys150, Cys164, Cys167, Cys190, Cys193, Cys204, and Cys207 together coordinate Zn(2+). CXXCXGXG motif repeat units lie at residues 147–154, 164–171, 190–197, and 204–211; these read CETCDGSG, CHYCNGSG, CPVCNGTG, and CPTCHGKG.

The protein belongs to the DnaJ family. In terms of assembly, homodimer. The cofactor is Zn(2+).

Its subcellular location is the cytoplasm. In terms of biological role, participates actively in the response to hyperosmotic and heat shock by preventing the aggregation of stress-denatured proteins and by disaggregating proteins, also in an autonomous, DnaK-independent fashion. Unfolded proteins bind initially to DnaJ; upon interaction with the DnaJ-bound protein, DnaK hydrolyzes its bound ATP, resulting in the formation of a stable complex. GrpE releases ADP from DnaK; ATP binding to DnaK triggers the release of the substrate protein, thus completing the reaction cycle. Several rounds of ATP-dependent interactions between DnaJ, DnaK and GrpE are required for fully efficient folding. Also involved, together with DnaK and GrpE, in the DNA replication of plasmids through activation of initiation proteins. This Staphylococcus carnosus (strain TM300) protein is Chaperone protein DnaJ.